Consider the following 173-residue polypeptide: VQ motif-containing protein 31 (173 aa).

The VQ signature appears at 27-36; that stretch reads FREIVQRLTG. Position 46 is a phosphothreonine (Thr-46). 2 disordered regions span residues 76 to 105 and 143 to 173; these read EIVK…TSPV and LHPS…SGKP. Residues 86–105 are compositionally biased toward polar residues; the sequence is PTGTTPSSKSGNTNLLTSPV. 4 positions are modified to phosphoserine: Ser-92, Ser-103, Ser-146, and Ser-149. Positions 154-165 are enriched in low complexity; it reads TEPELLTLFPLT. At Thr-165 the chain carries Phosphothreonine. A phosphoserine mark is found at Ser-166 and Ser-170.

Phosphorylated on serine and threonine residues by MPK6.

It is found in the nucleus. Functionally, may modulate WRKY transcription factor activities. This chain is VQ motif-containing protein 31, found in Arabidopsis thaliana (Mouse-ear cress).